The primary structure comprises 396 residues: Formate-dependent phosphoribosylglycinamide formyltransferase (396 aa).

N(1)-(5-phospho-beta-D-ribosyl)glycinamide-binding positions include 24-25 (EL) and E84. ATP is bound by residues R116, K157, 162 to 167 (SSGKGQ), 197 to 200 (EGFV), and E205. In terms of domain architecture, ATP-grasp spans 121–310 (RLAAETLGIK…EFALHVRAIL (190 aa)). Mg(2+) contacts are provided by E269 and E281. Residues D288, K359, and 366-367 (RR) each bind N(1)-(5-phospho-beta-D-ribosyl)glycinamide.

Belongs to the PurK/PurT family. As to quaternary structure, homodimer.

It catalyses the reaction N(1)-(5-phospho-beta-D-ribosyl)glycinamide + formate + ATP = N(2)-formyl-N(1)-(5-phospho-beta-D-ribosyl)glycinamide + ADP + phosphate + H(+). It participates in purine metabolism; IMP biosynthesis via de novo pathway; N(2)-formyl-N(1)-(5-phospho-D-ribosyl)glycinamide from N(1)-(5-phospho-D-ribosyl)glycinamide (formate route): step 1/1. Involved in the de novo purine biosynthesis. Catalyzes the transfer of formate to 5-phospho-ribosyl-glycinamide (GAR), producing 5-phospho-ribosyl-N-formylglycinamide (FGAR). Formate is provided by PurU via hydrolysis of 10-formyl-tetrahydrofolate. The polypeptide is Formate-dependent phosphoribosylglycinamide formyltransferase (Psychromonas ingrahamii (strain DSM 17664 / CCUG 51855 / 37)).